Here is a 347-residue protein sequence, read N- to C-terminus: MKPPILLIILLTMISGTMIVLTSSHWLTIWIGLEMNMLAIIPILMKKSNPRAIEASTKYLLTQATASMILMMGITINLMFSGQWATSKTLCPTTSAMVTTALAMKLGLAPFHFWVPEVTQGTHLSSGLILLTWQKIAPLSVLYQTSPTIDPNLLLPMAITSILIGGWGGLNQTQLRKILAYSSIAHMGWMTAVTLYNPTMMLLNLTIYIIMTTTTFMLFMYNSTTTTLSLSQTWNKAPLITPLILMLMLSLGGLPPLSGFIPKWMIIQELTKNEMIIIPTIMAITALLNLYFYMRLTYSTTLTMFPSTNNMKMKWKFDNMKKMILLSPLTVVSTMLLPITPLLSILD.

A run of 10 helical transmembrane segments spans residues 3 to 23 (PPIL…VLTS), 25 to 45 (HWLT…PILM), 60 to 80 (LLTQ…NLMF), 96 to 116 (AMVT…FWVP), 149 to 169 (IDPN…GWGG), 178 to 198 (ILAY…LYNP), 200 to 220 (MMLL…MLFM), 237 to 257 (APLI…LPPL), 274 to 294 (EMII…YFYM), and 323 to 343 (MILL…TPLL).

This sequence belongs to the complex I subunit 2 family. As to quaternary structure, core subunit of respiratory chain NADH dehydrogenase (Complex I) which is composed of 45 different subunits. Interacts with TMEM242.

The protein localises to the mitochondrion inner membrane. It catalyses the reaction a ubiquinone + NADH + 5 H(+)(in) = a ubiquinol + NAD(+) + 4 H(+)(out). Core subunit of the mitochondrial membrane respiratory chain NADH dehydrogenase (Complex I) which catalyzes electron transfer from NADH through the respiratory chain, using ubiquinone as an electron acceptor. Essential for the catalytic activity and assembly of complex I. The protein is NADH-ubiquinone oxidoreductase chain 2 of Mungos mungo (Banded mongoose).